Here is a 161-residue protein sequence, read N- to C-terminus: DNA-directed RNA polymerase 19 kDa subunit (161 aa).

Over residues 1 to 32 (MADTDDIIDYESDDLTEYEDDEEDGESLETSD) the composition is skewed to acidic residues. The disordered stretch occupies residues 1 to 35 (MADTDDIIDYESDDLTEYEDDEEDGESLETSDIDP).

This sequence belongs to the poxviridae DNA-directed RNA polymerase 19 kDa subunit family. The DNA-dependent RNA polymerase used for intermediate and late genes expression consists of eight subunits Rpo30/OPG66, Rpo7/OPG90, Rpo22/OPG103, Rpo147/OPG105, Rpo18/OPG119, Rpo19/OPG131, Rpo132/OPG151 and Rpo35/OPG156. The same holoenzyme, with the addition of the transcription-specificity factor OPG109, is used for early gene expression.

It is found in the virion. It catalyses the reaction RNA(n) + a ribonucleoside 5'-triphosphate = RNA(n+1) + diphosphate. Functionally, part of the DNA-dependent RNA polymerase which catalyzes the transcription of viral DNA into RNA using the four ribonucleoside triphosphates as substrates. Responsible for the transcription of early, intermediate and late genes. DNA-dependent RNA polymerase associates with the early transcription factor (ETF), itself composed of OPG118 and OPG133, thereby allowing the early genes transcription. Late transcription, and probably also intermediate transcription, require newly synthesized RNA polymerase. This Monkeypox virus protein is DNA-directed RNA polymerase 19 kDa subunit (OPG131).